Consider the following 298-residue polypeptide: Cyanophycinase (298 aa).

Catalysis depends on charge relay system residues Ser-155, Glu-173, and His-197.

This sequence belongs to the peptidase S51 family.

It catalyses the reaction [L-4-(L-arginin-2-N-yl)aspartate](n) + H2O = [L-4-(L-arginin-2-N-yl)aspartate](n-1) + L-4-(L-arginin-2-N-yl)aspartate. Functionally, exopeptidase that catalyzes the hydrolytic cleavage of multi-L-arginyl-poly-L-aspartic acid (cyanophycin; a water-insoluble reserve polymer) into aspartate-arginine dipeptides. The polypeptide is Cyanophycinase (cphB) (Nostoc sp. (strain PCC 7120 / SAG 25.82 / UTEX 2576)).